A 120-amino-acid chain; its full sequence is Aspartate 1-decarboxylase (120 aa).

The active-site Schiff-base intermediate with substrate; via pyruvic acid is Ser-25. Ser-25 is subject to Pyruvic acid (Ser). Position 57 (Thr-57) interacts with substrate. The active-site Proton donor is Tyr-58. Residue 73–75 coordinates substrate; it reads GAA.

This sequence belongs to the PanD family. Heterooctamer of four alpha and four beta subunits. The cofactor is pyruvate. In terms of processing, is synthesized initially as an inactive proenzyme, which is activated by self-cleavage at a specific serine bond to produce a beta-subunit with a hydroxyl group at its C-terminus and an alpha-subunit with a pyruvoyl group at its N-terminus.

It localises to the cytoplasm. The catalysed reaction is L-aspartate + H(+) = beta-alanine + CO2. It participates in cofactor biosynthesis; (R)-pantothenate biosynthesis; beta-alanine from L-aspartate: step 1/1. In terms of biological role, catalyzes the pyruvoyl-dependent decarboxylation of aspartate to produce beta-alanine. This is Aspartate 1-decarboxylase from Deinococcus geothermalis (strain DSM 11300 / CIP 105573 / AG-3a).